The chain runs to 1560 residues: uncharacterized protein (1560 aa).

The interval 1-46 (MEEIENAHYQNLENFNDETSEDVNDTSDDINKNNDDNNKYDDNNVN) is disordered. The span at 15 to 28 (FNDETSEDVNDTSD) shows a compositional bias: acidic residues. The segment covering 29–46 (DINKNNDDNNKYDDNNVN) has biased composition (basic and acidic residues). Coiled coils occupy residues 36–60 (DNNKYDDNNVNVLDDKNKLENEEDN) and 317–359 (KKNN…NNNN). The segment at 568 to 594 (KKKKKKNDHHERDSDNNNNDSNNNNYY) is disordered. Over residues 583-594 (NNNNDSNNNNYY) the composition is skewed to low complexity. Residues 1188–1239 (DTTNNILNKQNESLDNLKKNMYLSKNNYDNQLSSYKNTKQNKTNINEKYNNN) adopt a coiled-coil conformation. 2 helical membrane passes run 1271–1291 (LYISSMLYINIYLCQIFFILL) and 1314–1334 (LDYFYLLILLNFYSLFYILIS).

It localises to the membrane. This is an uncharacterized protein from Plasmodium falciparum (isolate 3D7).